The sequence spans 266 residues: MIQITVVQIDNYGPWTVTPNPRRESDLQALQSRLYCDMNLQFGAHKGLAFYTRFDNIIAITNGIDLETHRRIQNSIKNRYPFTVSMAIASAETPYDAQKLATEKLQEYGSAQDEVRKEVLDIANEFVSNGYVQLAHVDINDITGTLTDLETAYDTYLSVQMTKLKLMEELKKYNSMGFFIGGDNFMCPCNGMNEKDFQCMFEDIMESSGIELKAGIGIGKTAEDASNLADIGLEIIREGKTDLQVYKLKQATGETKSSPYNYMCPI.

The protein belongs to the archaeal-type GTP cyclohydrolase family.

It catalyses the reaction GTP + 3 H2O = 2-amino-5-formylamino-6-(5-phospho-D-ribosylamino)pyrimidin-4(3H)-one + 2 phosphate + 2 H(+). Functionally, catalyzes the formation of 2-amino-5-formylamino-6-ribofuranosylamino-4(3H)-pyrimidinone ribonucleotide monophosphate and inorganic phosphate from GTP. Also has an independent pyrophosphate phosphohydrolase activity. This is GTP cyclohydrolase III from Methanococcus vannielii (strain ATCC 35089 / DSM 1224 / JCM 13029 / OCM 148 / SB).